A 348-amino-acid polypeptide reads, in one-letter code: F-box protein At2g20380 (348 aa).

Residues 14-60 (SPESNSLPNDLIVTILARLSQSYYPKLSLVSKTFRAILASPELYQTR) form the F-box domain.

The sequence is that of F-box protein At2g20380 from Arabidopsis thaliana (Mouse-ear cress).